We begin with the raw amino-acid sequence, 361 residues long: MTVPCIPRGLVMADIAAFRLTEEEKQRLLDPAVGGVILFRRNFQNIAQLKELTAEIKALRTPELIIAVDHEGGRVQRFIEGFTRLPAMSTLGEIWDKDGASAAETAAGQVGRVLATELSACGIDLSFTPVLDLDWGNCPVIGNRSFHRNPEAVARLALALQKGLEKGGMKSCGKHFPGHGFVEGDSHLVLPEDGRSLSELEAADLAPFRIMSREGMAAVMPAHVVYPQVDTKPAGFSEIWLKQILRRDIGFKGVIFSDDLTMEGACGAGGIKERARISFEAGCDIVLVCNRPDLVDELREDFRIPDNPALAQRWQYMANTLGSAAAQAVMQTTDFQAAQAFVAGLASPQDTAGGVKVGEAF.

Residues Asp-69, Arg-77, Arg-144, and Lys-174–His-175 each bind substrate. Catalysis depends on His-187, which acts as the Proton donor/acceptor. The active-site Nucleophile is Asp-258.

It belongs to the glycosyl hydrolase 3 family. NagZ subfamily.

It is found in the cytoplasm. It catalyses the reaction Hydrolysis of terminal non-reducing N-acetyl-D-hexosamine residues in N-acetyl-beta-D-hexosaminides.. It functions in the pathway cell wall biogenesis; peptidoglycan recycling. In terms of biological role, plays a role in peptidoglycan recycling by cleaving the terminal beta-1,4-linked N-acetylglucosamine (GlcNAc) from peptide-linked peptidoglycan fragments, giving rise to free GlcNAc, anhydro-N-acetylmuramic acid and anhydro-N-acetylmuramic acid-linked peptides. This chain is Beta-hexosaminidase, found in Neisseria meningitidis serogroup C (strain 053442).